A 333-amino-acid polypeptide reads, in one-letter code: Glycerol-3-phosphate dehydrogenase [NAD(P)+] (333 aa).

Positions 10, 11, 31, 32, and 105 each coordinate NADPH. Lysine 105, glycine 136, and serine 138 together coordinate sn-glycerol 3-phosphate. Residue alanine 140 coordinates NADPH. Residues lysine 191, aspartate 244, serine 254, arginine 255, and asparagine 256 each coordinate sn-glycerol 3-phosphate. Lysine 191 (proton acceptor) is an active-site residue. NADPH is bound at residue arginine 255. Valine 279 and glutamate 281 together coordinate NADPH.

This sequence belongs to the NAD-dependent glycerol-3-phosphate dehydrogenase family.

It localises to the cytoplasm. It catalyses the reaction sn-glycerol 3-phosphate + NAD(+) = dihydroxyacetone phosphate + NADH + H(+). The enzyme catalyses sn-glycerol 3-phosphate + NADP(+) = dihydroxyacetone phosphate + NADPH + H(+). Its pathway is membrane lipid metabolism; glycerophospholipid metabolism. In terms of biological role, catalyzes the reduction of the glycolytic intermediate dihydroxyacetone phosphate (DHAP) to sn-glycerol 3-phosphate (G3P), the key precursor for phospholipid synthesis. This chain is Glycerol-3-phosphate dehydrogenase [NAD(P)+], found in Chlorobium limicola (strain DSM 245 / NBRC 103803 / 6330).